Consider the following 692-residue polypeptide: ABC transporter F family member 5 (692 aa).

The tract at residues E64 to S95 is disordered. Positions S86–S95 are enriched in polar residues. 2 ABC transporter domains span residues V98 to N356 and V425 to L640. ATP is bound by residues G130–T137 and G457–S464. The interval A644–N692 is disordered. The segment covering Q680–N692 has biased composition (basic residues).

The protein belongs to the ABC transporter superfamily. ABCF family. EF3 (TC 3.A.1.121) subfamily.

The chain is ABC transporter F family member 5 (ABCF5) from Arabidopsis thaliana (Mouse-ear cress).